A 265-amino-acid polypeptide reads, in one-letter code: Hydroxyethylthiazole kinase (265 aa).

Residue Met50 participates in substrate binding. Residues Arg125 and Thr171 each coordinate ATP. Residue Gly198 coordinates substrate.

It belongs to the Thz kinase family. It depends on Mg(2+) as a cofactor.

The enzyme catalyses 5-(2-hydroxyethyl)-4-methylthiazole + ATP = 4-methyl-5-(2-phosphooxyethyl)-thiazole + ADP + H(+). Its pathway is cofactor biosynthesis; thiamine diphosphate biosynthesis; 4-methyl-5-(2-phosphoethyl)-thiazole from 5-(2-hydroxyethyl)-4-methylthiazole: step 1/1. Catalyzes the phosphorylation of the hydroxyl group of 4-methyl-5-beta-hydroxyethylthiazole (THZ). This chain is Hydroxyethylthiazole kinase, found in Salmonella paratyphi A (strain ATCC 9150 / SARB42).